The primary structure comprises 293 residues: Glutamyl-Q tRNA(Asp) synthetase (293 aa).

Residues 4–8 (RYAPS) and Glu40 contribute to the L-glutamate site. The 'HIGH' region signature appears at 7–17 (PSPSGDLHFGN). Cys92, Cys94, Tyr113, and Cys117 together coordinate Zn(2+). L-glutamate is bound by residues Tyr180 and Arg198. Residues 236–240 (RLAKR) carry the 'KMSKS' region motif. Lys239 contacts ATP.

The protein belongs to the class-I aminoacyl-tRNA synthetase family. GluQ subfamily. It depends on Zn(2+) as a cofactor.

In terms of biological role, catalyzes the tRNA-independent activation of glutamate in presence of ATP and the subsequent transfer of glutamate onto a tRNA(Asp). Glutamate is transferred on the 2-amino-5-(4,5-dihydroxy-2-cyclopenten-1-yl) moiety of the queuosine in the wobble position of the QUC anticodon. In Corynebacterium glutamicum (strain ATCC 13032 / DSM 20300 / JCM 1318 / BCRC 11384 / CCUG 27702 / LMG 3730 / NBRC 12168 / NCIMB 10025 / NRRL B-2784 / 534), this protein is Glutamyl-Q tRNA(Asp) synthetase.